The primary structure comprises 633 residues: MTTPKKTAKTSGNEARELADLSEDIGIRFKYPNSERVYLQGSRDDIRVPLREIRQDDTYTAQGAEANPPIPVYDTSGVYGDPAAHIDLKQGLPHIRTVWLDERGDTEILPKLSSEYGIERAHDPKTAHLRFNQITRPRRAKAGRNVTQLHYARQGIITPEMEFVAIRERLKLDELSQKPEYAKLLKQHAGQSFGANIPTHPDQITPEFVRREIAAGRAIIPANINHPELEPMIIGRNFRVKINGNLGNSAVTSSLTEEVEKMVWSLRWGADTIMDLSTGAHIHETREWIIRNAPVPIGTVPIYQALEKTGGIAEDLTWDLFRDTLIEQAEQGVDYFTIHAGVLLRYVPMTANRLTGIVSRGGSIMAKWCLAHHRENFLYTHFDEICEIMKAYDVSFSLGDGLRPGCIADANDESQFAELHTLGELTDKAWKHDVQVMIEGPGHVPLQRVKENMTEELQHCFEAPFYTLGPLVTDIAPGYDHITSGIGAANIGWYGTAMLCYVTPKEHLGLPDKEDVRTGIITYKLAAHAADLAKGWPGAQLRDNALSKARFEFRWRDQFRLSLDPERAESFHDETLPAEGAKIAHFCSMCGPKFCSMKITQEVRDYADKQKAQRQGMEEKAVEFVKKGAKIYS.

Substrate-binding positions include N245, M274, Y303, H339, 359 to 361, 400 to 403, and E439; these read SRG and DGLR. H443 lines the Zn(2+) pocket. Y466 lines the substrate pocket. Position 507 (H507) interacts with Zn(2+). 3 residues coordinate [4Fe-4S] cluster: C587, C590, and C595.

Belongs to the ThiC family. As to quaternary structure, homodimer. [4Fe-4S] cluster serves as cofactor.

It catalyses the reaction 5-amino-1-(5-phospho-beta-D-ribosyl)imidazole + S-adenosyl-L-methionine = 4-amino-2-methyl-5-(phosphooxymethyl)pyrimidine + CO + 5'-deoxyadenosine + formate + L-methionine + 3 H(+). The protein operates within cofactor biosynthesis; thiamine diphosphate biosynthesis. Catalyzes the synthesis of the hydroxymethylpyrimidine phosphate (HMP-P) moiety of thiamine from aminoimidazole ribotide (AIR) in a radical S-adenosyl-L-methionine (SAM)-dependent reaction. This is Phosphomethylpyrimidine synthase from Neisseria meningitidis serogroup A / serotype 4A (strain DSM 15465 / Z2491).